An 862-amino-acid polypeptide reads, in one-letter code: Piwi-like protein 1 (862 aa).

Residues 1-13 are compositionally biased toward basic residues; it reads MTGRARARARGRA. The segment at 1 to 48 is disordered; it reads MTGRARARARGRARGQETVQHVGAAASQQPGYIPPRPQQSPTEGDLVG. Arg-14 is modified (omega-N-methylarginine; by PRMT5; alternate). Arg-14 carries the post-translational modification Symmetric dimethylarginine; by PRMT5; alternate. The residue at position 49 (Arg-49) is an Omega-N-methylarginine; by PRMT5. An Omega-N-methylarginine; alternate modification is found at Arg-53. Arg-53 carries the symmetric dimethylarginine; alternate modification. A D-box motif is present at residues 218–225; sequence RRLLKIMN. A PAZ domain is found at 279-392; that stretch reads TVLDFMFNLY…LIPELCYLTG (114 aa). The tract at residues 317–319 is required for binding 2'-O-methylated 3'-end of piRNAs; that stretch reads TYR. Position 371 is an omega-N-methylarginine; by PRMT5 (Arg-371). Residues 480–616 are MID region; it reads SKETRGAPLI…LQMNCKMGGE (137 aa). The 293-residue stretch at 556 to 848 folds into the Piwi domain; sequence IVVCLLSSNR…LAFLVGQSIH (293 aa). Catalysis depends on residues Asp-633, Glu-671, Asp-703, and His-837.

This sequence belongs to the argonaute family. Piwi subfamily. As to quaternary structure, interacts (via Piwi domain) with DICER1, suggesting that it forms ribonucleoprotein RISC complexes; this interaction is regulated by HSP90AB1 activity. Interacts with MAEL, KIF17, PABPC1, PRMT5 and WDR77. Interacts (when methylated on arginine residues) with TDRD1, TDRKH/TDRD2, RNF17/TDRD4, TDRD6, TDRD7 and TDRD9. Interacts with CLOCK. Interacts with MOV10L1. Interacts with ANAPC10; interaction oly takes place following piRNA-binding. Interacts with RNF8; leading to sequester RNF8 in the cytoplasm. Interacts with Tex19.1 and, probably, Tex19.2. Mg(2+) is required as a cofactor. In terms of processing, ubiquitinated by the anaphase promoting complex/cyclosome (APC/C) in late spermatids, leading to its degradation. Ubiquitination only takes place following piRNA-binding in adult testis. Ubiquitination and degradation in late spermatogenesis by APC/C is probably required to release RNF8 from the cytoplasm and promote histone to protamine exchange by RNF8. Post-translationally, arginine methylation by PRMT5 is required for the interaction with Tudor domain-containing protein (TDRD1, TDRKH/TDRD2, RNF17/TDRD4, TDRD6, TDRD7 and TDRD9) and subsequent localization to the meiotic nuage, also named P granule. As to expression, expressed in brain. Expressed in testis, specifically in spermatocytes (at protein level). Only detected in germ lineage cells of adult testis. Expressed in male gonads 2 weeks after birth at the initiation of spermatogenesis, but not expressed in female gonads.

The protein resides in the cytoplasm. Its function is as follows. Endoribonuclease that plays a central role in postnatal germ cells by repressing transposable elements and preventing their mobilization, which is essential for the germline integrity. Acts via the piRNA metabolic process, which mediates the repression of transposable elements during meiosis by forming complexes composed of piRNAs and Piwi proteins and governs the methylation and subsequent repression of transposons. Directly binds methylated piRNAs, a class of 24 to 30 nucleotide RNAs that are generated by a Dicer-independent mechanism and are primarily derived from transposons and other repeated sequence elements. Strongly prefers a uridine in the first position of their guide (g1U preference, also named 1U-bias). Not involved in the piRNA amplification loop, also named ping-pong amplification cycle. Acts as an endoribonuclease that cleaves transposon messenger RNAs. Besides their function in transposable elements repression, piRNAs are probably involved in other processes during meiosis such as translation regulation. Probable component of some RISC complex, which mediates RNA cleavage and translational silencing. Also plays a role in the formation of chromatoid bodies and is required for some miRNAs stability. Required to sequester RNF8 in the cytoplasm until late spermatogenesis; RNF8 being released upon ubiquitination and degradation of PIWIL1. This chain is Piwi-like protein 1, found in Mus musculus (Mouse).